Here is a 238-residue protein sequence, read N- to C-terminus: Neuromodulin (238 aa).

Residues 1 to 238 (MLCCMRRTKQ…EEPEADQEHA (238 aa)) form a disordered region. S-palmitoyl cysteine attachment occurs at residues Cys-3 and Cys-4. A compositionally biased stretch (basic and acidic residues) spans 9-32 (KQVEKNDDDQKIEQDGIKPEDKAH). Residues 31–60 (AHKAATKIQASFRGHITRKKLKGEKKDDVQ) enclose the IQ domain. The residue at position 41 (Ser-41) is a Phosphoserine; by PHK and PKC. The segment covering 54-83 (EKKDDVQAAEAEANKKDEAPVADGVEKKGE) has biased composition (basic and acidic residues). Residues 84 to 95 (GTTTAEAAPATG) show a composition bias toward low complexity. Positions 97–116 (KPDEPGKAGETPSEEKKGEG) are enriched in basic and acidic residues. The span at 119–130 (ATEQAAPQAPAS) shows a compositional bias: low complexity. Residues 139–154 (ETESATKASTDNSPSS) are compositionally biased toward polar residues. 3 positions are modified to phosphoserine: Ser-151, Ser-153, and Ser-154. Positions 155-167 (KAEDAPAKEEPKQ) are enriched in basic and acidic residues. Low complexity predominate over residues 168–199 (ADVPAAVTAAAATTPAAEDAAAKATAQPPTET). Thr-181 carries the phosphothreonine modification. A phosphoserine; by CK2 mark is found at Ser-202 and Ser-203. Basic and acidic residues predominate over residues 213-225 (DETKPKESARQDE). Residues 226–238 (GKEEEPEADQEHA) are compositionally biased toward acidic residues.

It belongs to the neuromodulin family. In terms of assembly, identified in a complex containing FGFR4, NCAM1, CDH2, PLCG1, FRS2, SRC, SHC1, GAP43 and CTTN. Interacts (via IQ domain) with calmodulin. Binds calmodulin with a greater affinity in the absence of Ca(2+) than in its presence. In terms of processing, phosphorylated. Phosphorylation of this protein by a protein kinase C is specifically correlated with certain forms of synaptic plasticity. Post-translationally, palmitoylated by ZDHHC3. Palmitoylation is regulated by ARF6 and is essential for plasma membrane association and axonal and dendritic filopodia induction. Deacylated by LYPLA2.

The protein resides in the cell membrane. It localises to the cell projection. It is found in the growth cone membrane. Its subcellular location is the synapse. The protein localises to the filopodium membrane. The protein resides in the perikaryon. It localises to the dendrite. It is found in the axon. Its subcellular location is the cytoplasm. This protein is associated with nerve growth. It is a major component of the motile 'growth cones' that form the tips of elongating axons. Plays a role in axonal and dendritic filopodia induction. In Homo sapiens (Human), this protein is Neuromodulin (GAP43).